A 273-amino-acid polypeptide reads, in one-letter code: Dermonecrotic toxin SdSicTox-betaIIB1bxi (273 aa).

Residue His4 is part of the active site. Mg(2+) is bound by residues Glu24 and Asp26. His40 functions as the Nucleophile in the catalytic mechanism. 2 disulfides stabilise this stretch: Cys44–Cys50 and Cys46–Cys189. A Mg(2+)-binding site is contributed by Asp84.

This sequence belongs to the arthropod phospholipase D family. Class II subfamily. Mg(2+) serves as cofactor. In terms of tissue distribution, expressed by the venom gland.

It localises to the secreted. It catalyses the reaction an N-(acyl)-sphingosylphosphocholine = an N-(acyl)-sphingosyl-1,3-cyclic phosphate + choline. It carries out the reaction an N-(acyl)-sphingosylphosphoethanolamine = an N-(acyl)-sphingosyl-1,3-cyclic phosphate + ethanolamine. The catalysed reaction is a 1-acyl-sn-glycero-3-phosphocholine = a 1-acyl-sn-glycero-2,3-cyclic phosphate + choline. The enzyme catalyses a 1-acyl-sn-glycero-3-phosphoethanolamine = a 1-acyl-sn-glycero-2,3-cyclic phosphate + ethanolamine. Its function is as follows. Dermonecrotic toxins cleave the phosphodiester linkage between the phosphate and headgroup of certain phospholipids (sphingolipid and lysolipid substrates), forming an alcohol (often choline) and a cyclic phosphate. This toxin acts on sphingomyelin (SM). It may also act on ceramide phosphoethanolamine (CPE), lysophosphatidylcholine (LPC) and lysophosphatidylethanolamine (LPE), but not on lysophosphatidylserine (LPS), and lysophosphatidylglycerol (LPG). It acts by transphosphatidylation, releasing exclusively cyclic phosphate products as second products. Induces dermonecrosis, hemolysis, increased vascular permeability, edema, inflammatory response, and platelet aggregation. This chain is Dermonecrotic toxin SdSicTox-betaIIB1bxi, found in Sicarius cf. damarensis (strain GJB-2008) (Six-eyed sand spider).